A 103-amino-acid chain; its full sequence is Large ribosomal subunit protein uL23 (103 aa).

It belongs to the universal ribosomal protein uL23 family. Part of the 50S ribosomal subunit. Contacts protein L29, and trigger factor when it is bound to the ribosome.

Its function is as follows. One of the early assembly proteins it binds 23S rRNA. One of the proteins that surrounds the polypeptide exit tunnel on the outside of the ribosome. Forms the main docking site for trigger factor binding to the ribosome. The protein is Large ribosomal subunit protein uL23 of Aquifex aeolicus (strain VF5).